The sequence spans 282 residues: Transcription factor MYB20 (282 aa).

HTH myb-type domains lie at 9–61 (KVGL…TNYL) and 62–116 (RPDL…KKKL). 2 consecutive DNA-binding regions (H-T-H motif) follow at residues 37-61 (WRAVPKLSGLLRCGKSCRLRWTNYL) and 89-112 (WSKIASHLPGRTDNEIKNHWNTHI).

As to expression, expressed in chalaza of mature seeds, cotyledons, rosette leaves, cauline leaves, veins of stems, mature siliques, sepals and styles. Expressed at low levels in roots.

It is found in the nucleus. Its function is as follows. Transcription factor that acts as a positive regulator of abscisic acid (ABA) signaling in response to salt stress. Acts as a negative regulator ABI1, ABI2 and PP2CA, which are protein phosphatases 2C acting as negative regulator of ABA signaling. Binds to the DNA specific sequence and core element 5'-ACGT-3' found in the promoters of ABI1 and PP2CA to negatively regulate their expression during ABA-dependent salt stress response. The sequence is that of Transcription factor MYB20 from Arabidopsis thaliana (Mouse-ear cress).